Reading from the N-terminus, the 136-residue chain is MTMTDPIADMLTRVRNASRAYHDSVVMPHSKIKTHIAEILQQEGYISSWHVDDATLAGGVGHTLVIDLKYGPNRERSIAGIKRISKPGLRVYAKATNLPKVLGGLGVAIISTSSGLLTDKQAGKRGVGGEVLAYVW.

The protein belongs to the universal ribosomal protein uS8 family. As to quaternary structure, part of the 30S ribosomal subunit. Contacts proteins S5 and S12.

Functionally, one of the primary rRNA binding proteins, it binds directly to 16S rRNA central domain where it helps coordinate assembly of the platform of the 30S subunit. This is Small ribosomal subunit protein uS8 from Frankia alni (strain DSM 45986 / CECT 9034 / ACN14a).